The sequence spans 120 residues: Transcription elongation factor SPT4 (120 aa).

Residues Met-1–Leu-39 form an interaction with spt-5 region. The C4-type zinc finger occupies Cys-15–Cys-35.

It belongs to the SPT4 family. As to quaternary structure, interacts with spt-5 to form DSIF. DSIF interacts with RNA polymerase II and with the positive transcription elongation factor b complex (P-TEFb complex), which is composed of cdk-9 and cyclin-T (cit-1.1 or cit-1.2).

It localises to the nucleus. Its function is as follows. May function as a component of the DRB sensitivity-inducing factor complex (DSIF complex), which regulates transcription elongation by RNA polymerase II. DSIF may enhance transcriptional pausing at sites proximal to the promoter, which may in turn facilitate the assembly of an elongation competent RNA polymerase II complex. The sequence is that of Transcription elongation factor SPT4 (spt-4) from Caenorhabditis elegans.